Consider the following 214-residue polypeptide: Probable nicotinate-nucleotide adenylyltransferase (214 aa).

The protein belongs to the NadD family.

It carries out the reaction nicotinate beta-D-ribonucleotide + ATP + H(+) = deamido-NAD(+) + diphosphate. It functions in the pathway cofactor biosynthesis; NAD(+) biosynthesis; deamido-NAD(+) from nicotinate D-ribonucleotide: step 1/1. Functionally, catalyzes the reversible adenylation of nicotinate mononucleotide (NaMN) to nicotinic acid adenine dinucleotide (NaAD). The protein is Probable nicotinate-nucleotide adenylyltransferase of Pseudomonas fluorescens (strain ATCC BAA-477 / NRRL B-23932 / Pf-5).